We begin with the raw amino-acid sequence, 504 residues long: MSFSVDMLANIAIELQRGIGHQDRFQRLITTLRQVLECDASALLRYDSRQFIPLAIDGLAKDVLGRRFALEGHPRLEAIARAGDVVRFPADSELPDPYDGLIPGQESLKVHACVGLPLFAGQNLIGALTLDGMQPDQFDVFSDEELRLIAALAAGALSNALLIEQLESQNMLPGDAAPFEALKETQMIGLSPGMTQLKKEIEIVAASDLNVLISGETGTGKELVAKAIHEASPRAVNPLVYLNCAALPESVAESELFGHVKGAFTGAISNRSGKFEMADNGTLFLDEIGELSLALQAKLLRVLQYGDIQRVGDDRSLRVDVRVLAATNRDLREEVLAGRFRADLFHRLSVFPLSVPPLRERGDDVILLAGYFCEQCRLRLGLSRVVLSSGARNLLQHYSFPGNVRELEHAIHRAVVLARATRSGDEVILEAQHFAFPEVTLPPPEAAAVPIVKQNLREATEAFQRETIRQAQAQNHHNWAASARMLETDVANLHRLAKRLGLKD.

Asp57 is modified (4-aspartylphosphate). A Sigma-54 factor interaction domain is found at 187–416; sequence MIGLSPGMTQ…LEHAIHRAVV (230 aa). Residues 215–222 and 278–287 each bind ATP; these read GETGTGKE and ADNGTLFLDE. Positions 479–498 form a DNA-binding region, H-T-H motif; sequence WAASARMLETDVANLHRLAK.

It participates in nitrogen metabolism; nitric oxide reduction. In terms of biological role, required for the expression of anaerobic nitric oxide (NO) reductase, acts as a transcriptional activator for at least the norVW operon. Activation also requires sigma-54. The polypeptide is Anaerobic nitric oxide reductase transcription regulator NorR (Escherichia coli O7:K1 (strain IAI39 / ExPEC)).